A 147-amino-acid polypeptide reads, in one-letter code: Antiholin-like protein LrgA (147 aa).

A run of 4 helical transmembrane segments spans residues 12-32 (PAHF…SKII), 35-55 (FMPI…VLLC), 74-94 (NIGL…GVIS), and 98-118 (FLII…TGYV).

This sequence belongs to the CidA/LrgA family. LrgA subfamily.

Its subcellular location is the cell membrane. In terms of biological role, inhibits the expression or activity of extracellular murein hydrolases by interacting, possibly with LrgB, with the holin-like proteins CidA and/or CidB. The LrgAB and CidAB proteins may affect the proton motive force of the membrane. May be involved in programmed cell death (PCD), possibly triggering PCD in response to antibiotics and environmental stresses. In Staphylococcus aureus (strain MSSA476), this protein is Antiholin-like protein LrgA.